A 338-amino-acid polypeptide reads, in one-letter code: Delta(9)-fatty-acid desaturase fat-7 (338 aa).

The next 4 helical transmembrane spans lie at 51–71 (VALF…LVFH), 76–96 (TAVF…AGAH), 194–214 (YFPL…VYFW), and 218–238 (AFIA…HATW).

The protein belongs to the fatty acid desaturase type 1 family. As to expression, expressed in the intestine in adult worms and in all four larval stages.

The protein resides in the membrane. It carries out the reaction octadecanoyl-CoA + 2 Fe(II)-[cytochrome b5] + O2 + 2 H(+) = (9Z)-octadecenoyl-CoA + 2 Fe(III)-[cytochrome b5] + 2 H2O. The catalysed reaction is hexadecanoyl-CoA + 2 Fe(II)-[cytochrome b5] + O2 + 2 H(+) = (9Z)-hexadecenoyl-CoA + 2 Fe(III)-[cytochrome b5] + 2 H2O. It catalyses the reaction heptadecanoyl-CoA + 2 Fe(II)-[cytochrome b5] + O2 + 2 H(+) = (9Z)-heptadecenoyl-CoA + 2 Fe(III)-[cytochrome b5] + 2 H2O. The enzyme catalyses (11E)-octadecenoyl-CoA + 2 Fe(II)-[cytochrome b5] + O2 + 2 H(+) = (9Z,11E)-octadecadienoyl-CoA + 2 Fe(III)-[cytochrome b5] + 2 H2O. The protein operates within lipid metabolism; monounsaturated fatty acid biosynthesis. It functions in the pathway lipid metabolism; fatty acid metabolism. In terms of biological role, delta(9)-fatty acid desaturase that acts preferentially on stearoyl-CoA (octadecanoyl-CoA) producing the monounsaturated oleoyl-CoA ((9Z)-octadecenoyl-CoA), one of the most abundant monounsaturated fatty acid in Caenorhabditis elegans phospholipids and triacylglycerols. Also acts on palmitoyl-CoA (hexadecanoyl-CoA), heptadecanoyl-CoA and (11E)-octadecenoyl-CoA (trans-vaccenoyl-CoA), the monounsaturated fatty acids (MUFAs) produced are further used by several other desaturases and elongases as substrates to synthesize polyunsaturated fatty acids (PUFAs) endogenously (PUFAs are essential for membrane structure and many cellular and physiological processes). Unlike plants, Caenorhabditis elegans desaturases seem to use fatty acyl-CoAs as substrates. Partially inhibits expression of genes involved in beta-oxidation, such as ech-1 and acs-2, perhaps signaling via the actions of one of its fatty acid products. May form part of a negative feedback loop with the transcription factor nhr-49 to limit beta-oxidation, in which nhr-49 stimulates expression of fat-7 and acs-2, and in turn fat-7 indirectly inhibits acs-2 and other genes also involved in beta-oxidation. The polypeptide is Delta(9)-fatty-acid desaturase fat-7 (fat-7) (Caenorhabditis elegans).